The primary structure comprises 169 residues: Putative 3-methyladenine DNA glycosylase (169 aa).

It belongs to the DNA glycosylase MPG family.

This is Putative 3-methyladenine DNA glycosylase from Wolbachia sp. subsp. Brugia malayi (strain TRS).